A 452-amino-acid chain; its full sequence is uncharacterized protein (452 aa).

14 consecutive transmembrane segments (helical) span residues Ala8–Ile28, Phe39–Val59, Phe77–Phe97, Leu100–Ile122, Leu134–Ile156, Trp161–Phe183, Leu203–Phe222, Pro226–Trp243, Ala266–Pro286, Leu302–Ile322, Pro330–Ile350, Leu359–Met379, Gly393–Gly415, and Met425–Leu447.

Belongs to the major facilitator superfamily.

The protein localises to the cell membrane. This is an uncharacterized protein from Bacillus subtilis (strain 168).